A 47-amino-acid chain; its full sequence is Defensin-like protein 2 (47 aa).

4 cysteine pairs are disulfide-bonded: C5–C47, C16–C36, C22–C43, and C26–C45.

Belongs to the DEFL family.

Fabatins have antibacterial activity against Gram-positive and Gram-negative bacteria. High activity against P.aeruginosa. No activity against S.cerevisiae and C.albicans. The sequence is that of Defensin-like protein 2 from Vicia faba (Broad bean).